Consider the following 32-residue polypeptide: ilv operon leader peptide (32 aa).

Functionally, this protein is involved in control of the biosynthesis of isoleucine, leucine, and valine. This Escherichia coli (strain K12) protein is ilv operon leader peptide (ivbL).